A 116-amino-acid polypeptide reads, in one-letter code: Large ribosomal subunit protein uL18 (116 aa).

It belongs to the universal ribosomal protein uL18 family. In terms of assembly, part of the 50S ribosomal subunit; part of the 5S rRNA/L5/L18/L25 subcomplex. Contacts the 5S and 23S rRNAs.

Its function is as follows. This is one of the proteins that bind and probably mediate the attachment of the 5S RNA into the large ribosomal subunit, where it forms part of the central protuberance. The protein is Large ribosomal subunit protein uL18 of Shewanella woodyi (strain ATCC 51908 / MS32).